The sequence spans 170 residues: Acetyl-CoA decarbonylase/synthase complex subunit epsilon 1 (170 aa).

It belongs to the CdhB family. Heterotetramer of two alpha and two epsilon subunits. The ACDS complex is made up of alpha, epsilon, beta, gamma and delta subunits with a probable stoichiometry of (alpha(2)epsilon(2))(4)-beta(8)-(gamma(1)delta(1))(8).

It participates in one-carbon metabolism; methanogenesis from acetate. Part of a complex that catalyzes the reversible cleavage of acetyl-CoA, allowing growth on acetate as sole source of carbon and energy. The alpha-epsilon subcomponent functions as a carbon monoxide dehydrogenase. The precise role of the epsilon subunit is unclear; it may have a stabilizing role within the alpha(2)epsilon(2) component and/or be involved in electron transfer to FAD during a potential FAD-mediated CO oxidation. This Methanosarcina barkeri (strain Fusaro / DSM 804) protein is Acetyl-CoA decarbonylase/synthase complex subunit epsilon 1.